Consider the following 420-residue polypeptide: Glucose-1-phosphate adenylyltransferase (420 aa).

Residues tyrosine 108, glycine 173, 188–189, and serine 206 each bind alpha-D-glucose 1-phosphate; that span reads EK.

Belongs to the bacterial/plant glucose-1-phosphate adenylyltransferase family. In terms of assembly, homotetramer.

The enzyme catalyses alpha-D-glucose 1-phosphate + ATP + H(+) = ADP-alpha-D-glucose + diphosphate. It functions in the pathway glycan biosynthesis; glycogen biosynthesis. Involved in the biosynthesis of ADP-glucose, a building block required for the elongation reactions to produce glycogen. Catalyzes the reaction between ATP and alpha-D-glucose 1-phosphate (G1P) to produce pyrophosphate and ADP-Glc. The polypeptide is Glucose-1-phosphate adenylyltransferase (Paraburkholderia phytofirmans (strain DSM 17436 / LMG 22146 / PsJN) (Burkholderia phytofirmans)).